The chain runs to 177 residues: Cytidylate kinase (177 aa).

8-16 (GPPGGGKTT) serves as a coordination point for ATP.

It belongs to the cytidylate kinase family. Type 2 subfamily.

Its subcellular location is the cytoplasm. It carries out the reaction CMP + ATP = CDP + ADP. The enzyme catalyses dCMP + ATP = dCDP + ADP. This is Cytidylate kinase from Staphylothermus marinus (strain ATCC 43588 / DSM 3639 / JCM 9404 / F1).